The following is a 297-amino-acid chain: uncharacterized protein (297 aa).

A compositionally biased stretch (polar residues) spans 1-12; that stretch reads MASYSFQFSTDA. Residues 1–21 form a disordered region; sequence MASYSFQFSTDATGKPGAAKP.

The protein to B.subtilis XkdY/XepA.

This is an uncharacterized protein from Bacillus subtilis (strain 168).